Reading from the N-terminus, the 468-residue chain is V-type proton ATPase subunit H (468 aa).

This sequence belongs to the V-ATPase H subunit family. V-ATPase is a heteromultimeric enzyme made up of two complexes: the ATP-hydrolytic V1 complex and the proton translocation V0 complex. The V1 complex consists of three catalytic AB heterodimers that form a heterohexamer, three peripheral stalks each consisting of EG heterodimers, one central rotor including subunits D and F, and the regulatory subunits C and H. The proton translocation complex V0 consists of the proton transport subunit a, a ring of proteolipid subunits c9c'', rotary subunit d, subunits e and f, and the accessory subunits VhaAC45 and ATP6AP2.

In terms of biological role, subunit of the V1 complex of vacuolar(H+)-ATPase (V-ATPase), a multisubunit enzyme composed of a peripheral complex (V1) that hydrolyzes ATP and a membrane integral complex (V0) that translocates protons. V-ATPase is responsible for acidifying and maintaining the pH of intracellular compartments and in some cell types, is targeted to the plasma membrane, where it is responsible for acidifying the extracellular environment. Subunit H is essential for V-ATPase activity, but not for the assembly of the complex. In Drosophila melanogaster (Fruit fly), this protein is V-type proton ATPase subunit H (VhaSFD).